We begin with the raw amino-acid sequence, 273 residues long: MLSRRGHRLSRFRKNKRRLRERLRQRIFFRDKVVPEAMEKPRVLVLTGAGISAESGIRTFRAADGLWEEHRVEDVATPEGFDRDPELVQTFYNARRRQLQQPEIQPNAAHLALAKLQDALGDRFLLVTQNIDNLHERAGNTNVIHMHGELLKVRCSQSGQVLDWTGDVTPEDKCHCCQFPAPLRPHVVWFGEMPLGMDEIYMALSMADIFIAIGTSGHVYPAAGFVHEAKLHGAHTVELNLEPSQVGNEFAEKYYGPASQVVPEFVEKLLKGL.

Residues 20-272 enclose the Deacetylase sirtuin-type domain; the sequence is RERLRQRIFF…PEFVEKLLKG (253 aa). Position 48-67 (48-67) interacts with NAD(+); sequence GAGISAESGIRTFRAADGLW. Substrate is bound by residues tyrosine 92 and arginine 95. Position 129–132 (129–132) interacts with NAD(+); the sequence is QNID. Catalysis depends on histidine 147, which acts as the Proton acceptor. Residues cysteine 155 and cysteine 174 each contribute to the Zn(2+) site. NAD(+) contacts are provided by residues 214–216, 240–242, and alanine 258; these read GTS and NLE.

It belongs to the sirtuin family. Class III subfamily. It depends on Zn(2+) as a cofactor.

It localises to the cytoplasm. It catalyses the reaction N(6)-acetyl-L-lysyl-[protein] + NAD(+) + H2O = 2''-O-acetyl-ADP-D-ribose + nicotinamide + L-lysyl-[protein]. The enzyme catalyses N(6)-succinyl-L-lysyl-[protein] + NAD(+) + H2O = 2''-O-succinyl-ADP-D-ribose + nicotinamide + L-lysyl-[protein]. It carries out the reaction N(6)-(2-hydroxyisobutanoyl)-L-lysyl-[protein] + NAD(+) + H2O = 2''-O-(2-hydroxyisobutanoyl)-ADP-D-ribose + nicotinamide + L-lysyl-[protein]. Its function is as follows. NAD-dependent lysine deacetylase that specifically removes acetyl groups on target proteins. Also acts as a protein-lysine deacylase by mediating protein desuccinylation and de-2-hydroxyisobutyrylation. Modulates the activities of several proteins which are inactive in their acylated form. This chain is NAD-dependent protein deacylase, found in Escherichia coli O6:H1 (strain CFT073 / ATCC 700928 / UPEC).